Consider the following 115-residue polypeptide: Large ribosomal subunit protein bL20 (115 aa).

This sequence belongs to the bacterial ribosomal protein bL20 family.

Functionally, binds directly to 23S ribosomal RNA and is necessary for the in vitro assembly process of the 50S ribosomal subunit. It is not involved in the protein synthesizing functions of that subunit. This Methylococcus capsulatus (strain ATCC 33009 / NCIMB 11132 / Bath) protein is Large ribosomal subunit protein bL20.